Consider the following 459-residue polypeptide: Argininosuccinate lyase (459 aa).

The protein belongs to the lyase 1 family. Argininosuccinate lyase subfamily.

Its subcellular location is the cytoplasm. The enzyme catalyses 2-(N(omega)-L-arginino)succinate = fumarate + L-arginine. The protein operates within amino-acid biosynthesis; L-arginine biosynthesis; L-arginine from L-ornithine and carbamoyl phosphate: step 3/3. This chain is Argininosuccinate lyase, found in Geobacillus sp. (strain WCH70).